We begin with the raw amino-acid sequence, 117 residues long: Ribonuclease P protein component (117 aa).

This sequence belongs to the RnpA family. As to quaternary structure, consists of a catalytic RNA component (M1 or rnpB) and a protein subunit.

It carries out the reaction Endonucleolytic cleavage of RNA, removing 5'-extranucleotides from tRNA precursor.. Functionally, RNaseP catalyzes the removal of the 5'-leader sequence from pre-tRNA to produce the mature 5'-terminus. It can also cleave other RNA substrates such as 4.5S RNA. The protein component plays an auxiliary but essential role in vivo by binding to the 5'-leader sequence and broadening the substrate specificity of the ribozyme. The chain is Ribonuclease P protein component from Desulforapulum autotrophicum (strain ATCC 43914 / DSM 3382 / VKM B-1955 / HRM2) (Desulfobacterium autotrophicum).